The chain runs to 124 residues: Small ribosomal subunit protein eS25 (124 aa).

Over residues 1 to 22 (PPKDDKKKKDAGKSAKKDKDPV) the composition is skewed to basic and acidic residues. Residues 1-37 (PPKDDKKKKDAGKSAKKDKDPVNKSGGKAKKKKWSKG) form a disordered region. The span at 27-37 (GKAKKKKWSKG) shows a compositional bias: basic residues. N6-acetyllysine is present on K42. N6-acetyllysine; alternate is present on K51. N6-succinyllysine; alternate is present on K51. K59 and K65 each carry N6-acetyllysine. K93 carries the post-translational modification N6-acetyllysine; alternate. The residue at position 93 (K93) is an N6-succinyllysine; alternate.

This sequence belongs to the eukaryotic ribosomal protein eS25 family. In terms of assembly, component of the small ribosomal subunit.

Its subcellular location is the cytoplasm. Functionally, component of the small ribosomal subunit. The ribosome is a large ribonucleoprotein complex responsible for the synthesis of proteins in the cell. The sequence is that of Small ribosomal subunit protein eS25 (RPS25) from Oryctolagus cuniculus (Rabbit).